A 423-amino-acid chain; its full sequence is D-tagatose-1,6-bisphosphate aldolase subunit GatZ (423 aa).

This sequence belongs to the GatZ/KbaZ family. GatZ subfamily. In terms of assembly, forms a complex with GatY.

It functions in the pathway carbohydrate metabolism; D-tagatose 6-phosphate degradation; D-glyceraldehyde 3-phosphate and glycerone phosphate from D-tagatose 6-phosphate: step 2/2. Functionally, component of the tagatose-1,6-bisphosphate aldolase GatYZ that is required for full activity and stability of the Y subunit. Could have a chaperone-like function for the proper and stable folding of GatY. When expressed alone, GatZ does not show any aldolase activity. Is involved in the catabolism of galactitol. The chain is D-tagatose-1,6-bisphosphate aldolase subunit GatZ from Salmonella typhimurium (strain LT2 / SGSC1412 / ATCC 700720).